The following is a 446-amino-acid chain: Glucose-1-phosphate adenylyltransferase (446 aa).

Alpha-D-glucose 1-phosphate-binding positions include tyrosine 119, glycine 184, 199–200, and serine 217; that span reads EK.

The protein belongs to the bacterial/plant glucose-1-phosphate adenylyltransferase family. In terms of assembly, homotetramer.

The enzyme catalyses alpha-D-glucose 1-phosphate + ATP + H(+) = ADP-alpha-D-glucose + diphosphate. It participates in glycan biosynthesis; glycogen biosynthesis. Involved in the biosynthesis of ADP-glucose, a building block required for the elongation reactions to produce glycogen. Catalyzes the reaction between ATP and alpha-D-glucose 1-phosphate (G1P) to produce pyrophosphate and ADP-Glc. In Rhodopirellula baltica (strain DSM 10527 / NCIMB 13988 / SH1), this protein is Glucose-1-phosphate adenylyltransferase.